The sequence spans 179 residues: CASP-like protein 1F1 (179 aa).

Topologically, residues Met1–Lys16 are cytoplasmic. The helical transmembrane segment at Leu17 to Thr37 threads the bilayer. Residues Trp38–Lys65 are Extracellular-facing. N-linked (GlcNAc...) asparagine glycosylation occurs at Asn59. Residues Phe66–Cys86 form a helical membrane-spanning segment. At Ala87–Asp105 the chain is on the cytoplasmic side. Residues Leu106–Gly126 form a helical membrane-spanning segment. Over Lys127–Thr150 the chain is Extracellular. Residues Ile151–Ala171 form a helical membrane-spanning segment. Topologically, residues Asn172–Val179 are cytoplasmic.

It belongs to the Casparian strip membrane proteins (CASP) family. In terms of assembly, homodimer and heterodimers.

The protein resides in the cell membrane. The protein is CASP-like protein 1F1 of Ricinus communis (Castor bean).